The chain runs to 130 residues: Small ribosomal subunit protein uS9 (130 aa).

Belongs to the universal ribosomal protein uS9 family.

The chain is Small ribosomal subunit protein uS9 from Pseudomonas entomophila (strain L48).